The primary structure comprises 500 residues: Low-density lipoprotein receptor-related protein 11 (500 aa).

Residues 1-37 (MASVAQESAGSQRRLPPRHGALRGLLLLCLWLPSGRA) form the signal peptide. Residues 38–450 (ALPPAAPLSE…GGEHPAPETG (413 aa)) lie on the Extracellular side of the membrane. The region spanning 99–184 (AMPDAIIRTK…FALHSGYSSY (86 aa)) is the MANSC domain. N-linked (GlcNAc...) asparagine glycosylation is found at Asn-164 and Asn-291. Positions 210-305 (PLSKAGQDVV…VLRAAYSTGG (96 aa)) constitute a PKD domain. Residues 309–345 (TCSRYHFFCDDGCCIDITLACDGVQQCPDGSDEDFCQ) enclose the LDL-receptor class A domain. 3 disulfide bridges follow: Cys-310-Cys-322, Cys-317-Cys-335, and Cys-329-Cys-344. The tract at residues 358 to 445 (AASPALPRTT…KGDGGGGEHP (88 aa)) is disordered. An N-linked (GlcNAc...) asparagine glycan is attached at Asn-401. Residues 451–473 (AVLPLALGLAITALLLLMVACRL) traverse the membrane as a helical segment. At 474–500 (RLVKQKLKKARPITSEESDYLINGMYL) the chain is on the cytoplasmic side. Position 491 is a phosphoserine (Ser-491).

This sequence belongs to the LDLR family.

It localises to the membrane. The protein is Low-density lipoprotein receptor-related protein 11 (LRP11) of Homo sapiens (Human).